A 69-amino-acid chain; its full sequence is Arabinogalactan protein 24 (69 aa).

Positions Met-1–Ala-25 are cleaved as a signal peptide. Pro-34, Pro-36, Pro-38, and Pro-40 each carry 4-hydroxyproline. O-linked (Ara...) hydroxyproline glycans are attached at residues Pro-34, Pro-36, Pro-38, and Pro-40. Ser-42 carries GPI-anchor amidated serine lipidation. Residues Ser-43–His-69 constitute a propeptide, removed in mature form.

This sequence belongs to the AG-peptide AGP family. Post-translationally, contains 4-hydroxyproline; hydroxylated on Pro-34, Pro-36, Pro-38 and Pro-40. O-glycosylated on hydroxyprolines; noncontiguous hydroxylproline residues are glycosylated with arabinogalactan.

The protein localises to the cell membrane. Functionally, proteoglycan that seems to be implicated in diverse developmental roles such as differentiation, cell-cell recognition, embryogenesis and programmed cell death. This is Arabinogalactan protein 24 from Arabidopsis thaliana (Mouse-ear cress).